Reading from the N-terminus, the 310-residue chain is Ribosomal RNA small subunit methyltransferase H (310 aa).

Residues 32 to 34 (AGH), Asp52, Phe79, Asp100, and Gln107 each bind S-adenosyl-L-methionine.

Belongs to the methyltransferase superfamily. RsmH family.

The protein resides in the cytoplasm. It catalyses the reaction cytidine(1402) in 16S rRNA + S-adenosyl-L-methionine = N(4)-methylcytidine(1402) in 16S rRNA + S-adenosyl-L-homocysteine + H(+). In terms of biological role, specifically methylates the N4 position of cytidine in position 1402 (C1402) of 16S rRNA. This is Ribosomal RNA small subunit methyltransferase H from Bacillus pumilus (strain SAFR-032).